The sequence spans 361 residues: Ribosomal RNA large subunit methyltransferase M (361 aa).

S-adenosyl-L-methionine is bound by residues Ser-187, 220–223, Asp-239, Asp-259, and Asp-276; that span reads CPGG. Lys-305 (proton acceptor) is an active-site residue.

The protein belongs to the class I-like SAM-binding methyltransferase superfamily. RNA methyltransferase RlmE family. RlmM subfamily. In terms of assembly, monomer.

Its subcellular location is the cytoplasm. The catalysed reaction is cytidine(2498) in 23S rRNA + S-adenosyl-L-methionine = 2'-O-methylcytidine(2498) in 23S rRNA + S-adenosyl-L-homocysteine + H(+). Functionally, catalyzes the 2'-O-methylation at nucleotide C2498 in 23S rRNA. This Shewanella sp. (strain MR-7) protein is Ribosomal RNA large subunit methyltransferase M.